A 477-amino-acid polypeptide reads, in one-letter code: MRGGYYVLTALFVVASSEIAAESGHQLQANNHGRKIDDDAAMKSLSTRFLRESRGVHGNVANEERSVYSVLAGMINEGIKKMPRTAEVLKRKSRVIDPSDKIPHEAKLVEEMFHAAKAKETMESAEEYNELKTATEDAEKALKKHWNPSKTAVKGDDSHDIHSNEMLSVKNWWVDFTGLKSTVVDDTQDDMVDSVHNAFVTVCDKNIKPTREETSFLSRLLNWKVANSPRSVHKQRLIQRAQRYVILDLWKMQNTCKVWPEWEKLSDTLKFSVLDYLLNLHYQRLVRMYNIFARKRPDRNPAPLNPELNLVGNTGTSAAMAVNKNSKGQIPYPSEPLNAASTSKGERFHLIKRSKRTSDGNTDIASLPSIRSKVRSSKSVMPLLTESTTSGDHSVPAKRSRFSSSGLSRAFSPYKPGDHTFITENSRLSFDGPRSAVDPYTQSKKHSTKALAPSSTVFTPEDVDTKLSLGGIYDRST.

A signal peptide spans M1–A20. The RxLR-dEER signature appears at R48 to R65. Disordered stretches follow at residues S326–G345, I351–I370, S376–R401, and P433–S455.

It belongs to the RxLR effector family.

It is found in the secreted. Its subcellular location is the host nucleus. Its function is as follows. Secreted effector that acts as an elicitor that induces cell death in host plant cells. The sequence is that of Secreted RxLR effector protein 102 from Plasmopara viticola (Downy mildew of grapevine).